A 167-amino-acid polypeptide reads, in one-letter code: Ribosome maturation factor RimM (167 aa).

A PRC barrel domain is found at 94-165; it reads EHEYYYSDII…TIKITPMEGL (72 aa).

This sequence belongs to the RimM family. Binds ribosomal protein uS19.

The protein localises to the cytoplasm. An accessory protein needed during the final step in the assembly of 30S ribosomal subunit, possibly for assembly of the head region. Essential for efficient processing of 16S rRNA. May be needed both before and after RbfA during the maturation of 16S rRNA. It has affinity for free ribosomal 30S subunits but not for 70S ribosomes. The chain is Ribosome maturation factor RimM from Staphylococcus epidermidis (strain ATCC 35984 / DSM 28319 / BCRC 17069 / CCUG 31568 / BM 3577 / RP62A).